A 416-amino-acid chain; its full sequence is Nuclear hormone receptor family member nhr-67 (416 aa).

The nuclear receptor DNA-binding region spans 18–98 (DVDCRVCEDH…IGMNKDAVQH (81 aa)). 2 consecutive NR C4-type zinc fingers follow at residues 21–41 (CRVCEDHSSGKHYSIFSCDGC) and 57–86 (CKNKGSPSEGQCKVDKTHRNQCRACRLRKC). Positions 331–398 (KTETEEGEDI…SSRPRHSIRS (68 aa)) are disordered. Positions 335-346 (EEGEDIEEEDDA) are enriched in acidic residues. The segment covering 377 to 390 (SSTQPSSASSPSSS) has biased composition (low complexity).

It belongs to the nuclear hormone receptor family. As to expression, expressed in linker cell.

The protein localises to the nucleus. Its function is as follows. Orphan nuclear receptor that binds DNA containing an extended core motif half-site sequence 5'-AAGTCA-3'. In males, plays an essential role in the migration of the linker cell which guides gonad elongation during the L3 and L4 stages of larval development by negatively regulating the expression of netrin receptor unc-5 at the mid-L3 stage. Involved in the regulation of non-apoptotic cell death in the linker cell, acting upstream of or in parallel to transcription factor hsf-1. Represses hypoxia response genes, fmo-2 and acs-2, in both normoxic and hypoxic conditions, probably acting via repression of nuclear receptor nhr-49. The sequence is that of Nuclear hormone receptor family member nhr-67 (nhr-67) from Caenorhabditis elegans.